The chain runs to 676 residues: Head-specific guanylate cyclase (676 aa).

Residues 466 to 593 (TILFSDIVGF…HSVTIANKFE (128 aa)) form the Guanylate cyclase domain.

It belongs to the adenylyl cyclase class-4/guanylyl cyclase family. As to quaternary structure, heterodimer. Head, where it is preferentially expressed in the CNS and the retina. Not found in bodies.

The protein resides in the cytoplasm. The enzyme catalyses GTP = 3',5'-cyclic GMP + diphosphate. Functionally, may have a role in phototransduction. Catalyzes the conversion of GTP to cGMP, a common second messenger that is utilized in a wide variety of cells and signal transduction pathways. A second subunit is required for enzyme activity. This chain is Head-specific guanylate cyclase (Gycalpha99B), found in Drosophila melanogaster (Fruit fly).